We begin with the raw amino-acid sequence, 350 residues long: tRNA uridine(34) hydroxylase (350 aa).

The 95-residue stretch at 146-240 (DDPDAVFIDM…YARKAREQGL (95 aa)) folds into the Rhodanese domain. C200 serves as the catalytic Cysteine persulfide intermediate. A disordered region spans residues 314-350 (PEEEQRRRRAGRENGNKIFNKSRGRLNTQLGIPDPAE). Residues 316–328 (EEQRRRRAGRENG) are compositionally biased toward basic and acidic residues.

It belongs to the TrhO family.

It carries out the reaction uridine(34) in tRNA + AH2 + O2 = 5-hydroxyuridine(34) in tRNA + A + H2O. Functionally, catalyzes oxygen-dependent 5-hydroxyuridine (ho5U) modification at position 34 in tRNAs. The sequence is that of tRNA uridine(34) hydroxylase from Citrobacter koseri (strain ATCC BAA-895 / CDC 4225-83 / SGSC4696).